A 205-amino-acid chain; its full sequence is tRNA 2-(methylsulfanyl)-N(6)-isopentenyladenosine(37) hydroxylase (205 aa).

The Fe cation site is built by glutamate 38, glutamate 69, histidine 72, glutamate 122, glutamate 151, and histidine 154.

It belongs to the MiaE family. Homodimer. Requires Fe cation as cofactor.

It carries out the reaction 2-methylsulfanyl-N(6)-dimethylallyladenosine(37) in tRNA + AH2 + O2 = N(6)-[(2E)-4-hydroxy-3-methylbut-2-en-1-yl]-2-(methylsulfanyl)adenosine(37) in tRNA + A + H2O. It participates in tRNA modification; 2-methylthio-N-6-(cis-hydroxy)isopentenyl adenosine-tRNA biosynthesis. Involved in specific tRNA modification. Catalyzes the oxygen-dependent hydroxylation of 2-methylthio-N-6-isopentenyl adenosine (ms2i6A) to produce 2-methylthio-N-6-(cis-hydroxy)isopentenyl adenosine (ms2io6A) at position 37 in tRNAs. The sequence is that of tRNA 2-(methylsulfanyl)-N(6)-isopentenyladenosine(37) hydroxylase from Pseudomonas putida (strain ATCC 47054 / DSM 6125 / CFBP 8728 / NCIMB 11950 / KT2440).